Reading from the N-terminus, the 505-residue chain is Trans-cinnamate 4-monooxygenase (505 aa).

A helical transmembrane segment spans residues 3–23 (LLLLEKTLLALFLAAITAITI). Residues 213-218 (RSRLAQ) and Ala306 contribute to the (E)-cinnamate site. Cys447 is a heme binding site.

This sequence belongs to the cytochrome P450 family. The cofactor is heme.

It localises to the membrane. It carries out the reaction (E)-cinnamate + reduced [NADPH--hemoprotein reductase] + O2 = (E)-4-coumarate + oxidized [NADPH--hemoprotein reductase] + H2O + H(+). The protein operates within phenylpropanoid metabolism; trans-4-coumarate biosynthesis; trans-4-coumarate from trans-cinnamate: step 1/1. Catalyzes the first oxidative step of the phenylpropanoid pathway in higher plants by transforming trans-cinnamate into p-coumarate. The compounds formed by this pathway are essential components for lignification, pollination, and defense against ultraviolet light, predators and pathogens. In Pisum sativum (Garden pea), this protein is Trans-cinnamate 4-monooxygenase (CYP73A9).